The following is a 356-amino-acid chain: Tyrosine recombinase XerS (356 aa).

Residues 16–121 (TMPWYILEYY…ALSSLYKYLT (106 aa)) form the Core-binding (CB) domain. Residues 169–354 (EFLQYIDTEY…VNDEQKNALD (186 aa)) enclose the Tyr recombinase domain. Active-site residues include Arg210, Lys234, His306, Arg309, and His332. Tyr341 serves as the catalytic O-(3'-phospho-DNA)-tyrosine intermediate.

It belongs to the 'phage' integrase family. XerS subfamily.

The protein resides in the cytoplasm. With respect to regulation, ftsK is required for recombination. In terms of biological role, site-specific tyrosine recombinase, which acts by catalyzing the cutting and rejoining of the recombining DNA molecules. Essential to convert dimers of the bacterial chromosome into monomers to permit their segregation at cell division. This chain is Tyrosine recombinase XerS, found in Streptococcus sanguinis (strain SK36).